A 560-amino-acid chain; its full sequence is Chaperonin GroEL 2 (560 aa).

ATP-binding positions include 29–32, 86–90, Gly-413, 478–480, and Asp-494; these read TLGP, DGTTT, and NAA.

Belongs to the chaperonin (HSP60) family. As to quaternary structure, forms a cylinder of 14 subunits composed of two heptameric rings stacked back-to-back. Interacts with the co-chaperonin GroES.

Its subcellular location is the cytoplasm. The catalysed reaction is ATP + H2O + a folded polypeptide = ADP + phosphate + an unfolded polypeptide.. Functionally, together with its co-chaperonin GroES, plays an essential role in assisting protein folding. The GroEL-GroES system forms a nano-cage that allows encapsulation of the non-native substrate proteins and provides a physical environment optimized to promote and accelerate protein folding. The protein is Chaperonin GroEL 2 of Trichormus variabilis (strain ATCC 29413 / PCC 7937) (Anabaena variabilis).